The following is a 164-amino-acid chain: Peptide deformylase (164 aa).

2 residues coordinate Fe cation: Cys87 and His129. The active site involves Glu130. Residue His133 coordinates Fe cation.

Belongs to the polypeptide deformylase family. Fe(2+) serves as cofactor.

The enzyme catalyses N-terminal N-formyl-L-methionyl-[peptide] + H2O = N-terminal L-methionyl-[peptide] + formate. Removes the formyl group from the N-terminal Met of newly synthesized proteins. Requires at least a dipeptide for an efficient rate of reaction. N-terminal L-methionine is a prerequisite for activity but the enzyme has broad specificity at other positions. This chain is Peptide deformylase, found in Thermotoga maritima (strain ATCC 43589 / DSM 3109 / JCM 10099 / NBRC 100826 / MSB8).